The primary structure comprises 430 residues: Serine--tRNA ligase (430 aa).

237-239 (TAE) contributes to the L-serine binding site. Residue 268-270 (RSE) participates in ATP binding. Residue Glu-291 coordinates L-serine. ATP is bound at residue 355–358 (EISS). Ser-391 serves as a coordination point for L-serine.

Belongs to the class-II aminoacyl-tRNA synthetase family. Type-1 seryl-tRNA synthetase subfamily. As to quaternary structure, homodimer. The tRNA molecule binds across the dimer.

The protein localises to the cytoplasm. The catalysed reaction is tRNA(Ser) + L-serine + ATP = L-seryl-tRNA(Ser) + AMP + diphosphate + H(+). It catalyses the reaction tRNA(Sec) + L-serine + ATP = L-seryl-tRNA(Sec) + AMP + diphosphate + H(+). It participates in aminoacyl-tRNA biosynthesis; selenocysteinyl-tRNA(Sec) biosynthesis; L-seryl-tRNA(Sec) from L-serine and tRNA(Sec): step 1/1. Catalyzes the attachment of serine to tRNA(Ser). Is also able to aminoacylate tRNA(Sec) with serine, to form the misacylated tRNA L-seryl-tRNA(Sec), which will be further converted into selenocysteinyl-tRNA(Sec). This is Serine--tRNA ligase from Escherichia fergusonii (strain ATCC 35469 / DSM 13698 / CCUG 18766 / IAM 14443 / JCM 21226 / LMG 7866 / NBRC 102419 / NCTC 12128 / CDC 0568-73).